The following is a 58-amino-acid chain: Ferredoxin-2 (58 aa).

4Fe-4S ferredoxin-type domains are found at residues 2–27 (IEVNDDCMACEACVEICPDVFEMNEE) and 30–58 (KAVVINPDSDLDCVEEAIDSCPAEAIVRS). Residue Cys-8 coordinates [3Fe-4S] cluster. Cys-11 carries the post-translational modification Cysteine methyl disulfide. Residue Cys-14 coordinates [3Fe-4S] cluster. Residues Cys-18 and Cys-42 are joined by a disulfide bond. [3Fe-4S] cluster is bound at residue Cys-50.

Homodimer (ferredoxin I) or homotetramer (ferredoxin II). Requires [3Fe-4S] cluster as cofactor. [4Fe-4S] cluster is required as a cofactor.

Functionally, ferredoxins are iron-sulfur proteins that transfer electrons in a wide variety of metabolic reactions. The protein is Ferredoxin-2 of Megalodesulfovibrio gigas (Desulfovibrio gigas).